The chain runs to 193 residues: Achaete-scute homolog 2 (193 aa).

2 disordered regions span residues Met1–Arg58 and Pro128–Ser177. The region spanning Ala50–Leu102 is the bHLH domain. Positions Pro128–Arg152 are enriched in low complexity.

As to quaternary structure, efficient DNA binding requires dimerization with another basic helix-loop-helix (bHLH) protein. Forms heterodimers with bHLH transcription factor TCF3. May not heterodimerise with bHLH protein HAND1. Expressed in placenta.

The protein localises to the nucleus. Functionally, transcription factor. Binds to E-box motifs 5'-CANNTG-3' in the regulatory elements of target genes, probably as a heterodimer with another basic helix-loop-helix (bHLH) protein such as the transcription factor TCF3. May bind both open and closed chromatin, acting as a pioneer transcription factor to allow other factors to bind and activate lineage-specific genes. Required during post-implantation development for the generation of some differentiated trophoblast cell types. Transcriptional activity of ASCL2 may be antagonised in a subset of trophoblast cells by bHLH transcription factor HAND1, perhaps by competing for dimerization with other bHLH proteins. Involved in differentiation and function of follicular T-helper (Tfh) cells, thereby playing a role in germinal center responses; probably modulates expression of genes involved in Tfh cell function, such as BCL6. May also act as a suppressor of Th1-, Th2- and Th17-cell differentiation. Induces the formation of stem cells in intestinal crypts in vitro, synergistically activating transcription of target genes, such as SOX9, together with TCF4/beta-catenin. May form a bistable transcriptional switch, controlling expression of its own gene together with Wnt/R-spondin signaling, and thereby maintaining stem cell characteristics. Modulates expression of target genes, including perhaps down-regulating EGR1/Krox24 and chemokine CXCL10/Mob-1 and up-regulating CXCR4 and CDKN1C/p57kip2, in Schwann cells. May play a role in reducing proliferation of Schwann cells, perhaps acting via modulation of expression of CDKN1C. May be dispensable for blastocyst formation and later embryonic function. May be involved in the determination of neuronal precursors. The chain is Achaete-scute homolog 2 (ASCL2) from Bos taurus (Bovine).